Reading from the N-terminus, the 430-residue chain is Adenylosuccinate synthetase (430 aa).

GTP-binding positions include 12–18 (GDEGKGK) and 40–42 (GHT). The active-site Proton acceptor is the aspartate 13. Residues aspartate 13 and glycine 40 each contribute to the Mg(2+) site. IMP is bound by residues 13 to 16 (DEGK), 38 to 41 (NAGH), threonine 128, arginine 142, glutamine 223, threonine 238, and arginine 302. Histidine 41 functions as the Proton donor in the catalytic mechanism. Residue 298–304 (TTTGRPR) coordinates substrate. Residues arginine 304, 330 to 332 (SID), and 412 to 414 (SVG) contribute to the GTP site.

Belongs to the adenylosuccinate synthetase family. As to quaternary structure, homodimer. Mg(2+) serves as cofactor.

The protein resides in the cytoplasm. The catalysed reaction is IMP + L-aspartate + GTP = N(6)-(1,2-dicarboxyethyl)-AMP + GDP + phosphate + 2 H(+). It functions in the pathway purine metabolism; AMP biosynthesis via de novo pathway; AMP from IMP: step 1/2. Its function is as follows. Plays an important role in the de novo pathway of purine nucleotide biosynthesis. Catalyzes the first committed step in the biosynthesis of AMP from IMP. The sequence is that of Adenylosuccinate synthetase from Streptococcus pyogenes serotype M12 (strain MGAS9429).